The primary structure comprises 1128 residues: Lysylphosphatidylglycerol biosynthesis bifunctional protein LysX (1128 aa).

The interval 1-47 (MDNPPPTGVAPRHLPPGSVHTGKVTASLSHRRPDSVQDAPPAPVPHR) is disordered. The phosphatidylglycerol lysyltransferase stretch occupies residues 1–632 (MDNPPPTGVA…GLHADGSPPD (632 aa)). The next 6 helical transmembrane spans lie at 55-75 (VPHI…LWSL), 97-117 (APDT…AIAS), 121-141 (IAWW…GLRF), 147-167 (INAL…IAAW), 184-204 (GVLV…VEVF), and 240-260 (FVNV…VLTL). A disordered region spans residues 619–644 (DTLTGLHADGSPPDWPKPDLLDSGPR). The lysine--tRNA ligase stretch occupies residues 633-1128 (WPKPDLLDSG…TLPFPLVKPR (496 aa)). Positions 634-644 (PKPDLLDSGPR) are enriched in basic and acidic residues. 2 residues coordinate Mg(2+): Asp1040 and Glu1047.

It in the N-terminal section; belongs to the LPG synthetase family. This sequence in the C-terminal section; belongs to the class-II aminoacyl-tRNA synthetase family. Mg(2+) serves as cofactor.

Its subcellular location is the cell membrane. The catalysed reaction is tRNA(Lys) + L-lysine + ATP = L-lysyl-tRNA(Lys) + AMP + diphosphate. It carries out the reaction L-lysyl-tRNA(Lys) + a 1,2-diacyl-sn-glycero-3-phospho-(1'-sn-glycerol) = a 1,2-diacyl-sn-glycero-3-phospho-1'-(3'-O-L-lysyl)-sn-glycerol + tRNA(Lys). Catalyzes the production of L-lysyl-tRNA(Lys)transfer and the transfer of a lysyl group from L-lysyl-tRNA(Lys) to membrane-bound phosphatidylglycerol (PG), which produces lysylphosphatidylglycerol (LPG), one of the components of the bacterial membrane with a positive net charge. LPG synthesis contributes to the resistance to cationic antimicrobial peptides (CAMPs) and likely protects M.tuberculosis against the CAMPs produced by competiting microorganisms (bacteriocins). In fact, the modification of anionic phosphatidylglycerol with positively charged L-lysine results in repulsion of the peptides. In Nocardia farcinica (strain IFM 10152), this protein is Lysylphosphatidylglycerol biosynthesis bifunctional protein LysX (lysX).